The chain runs to 248 residues: Probable transcriptional regulatory protein Atu3727 (248 aa).

Residues M1–R21 are disordered.

The protein belongs to the TACO1 family.

It is found in the cytoplasm. The protein is Probable transcriptional regulatory protein Atu3727 of Agrobacterium fabrum (strain C58 / ATCC 33970) (Agrobacterium tumefaciens (strain C58)).